Reading from the N-terminus, the 627-residue chain is Meiosis-specific transcription factor NDT80 (627 aa).

Positions 28 to 335 (EEDTPVILTQ…RSPSNYASSQ (308 aa)) form a DNA-binding region, NDT80. The segment at 324 to 410 (RGRSPSNYAS…MEASKENEDP (87 aa)) is disordered. 2 stretches are compositionally biased toward polar residues: residues 327-351 (SPSN…SQNS) and 386-401 (SGAS…STPM).

In terms of assembly, binds to DNA as a monomer. Phosphorylated by pachytene checkpoint kinase IME2, but also phosphorylated in an IME2-independent manner. Phosphorylation probably eliminates SUM1-mediated repression and is also required for full transcriptional activation activity. Phosphorylation of the DNA-binding domain by IME2 does not alter DNA binding affinity.

The protein resides in the nucleus. Its function is as follows. Transcription factor required for successful completion of meiosis and spore formation. Gets activated after completion of meiotic recombination at the end of prophase I. Recognizes and binds to the middle sporulation element (MSE) 5'-C[AG]CAAA[AT]-3' in the promoter region of stage-specific genes that are required for progression through meiosis and sporulation. Competes for binding to MSE with the transcriptional repressor SUM1, which represses middle sporulation-specific genes during mitosis and early sporulation. In Saccharomyces cerevisiae (strain ATCC 204508 / S288c) (Baker's yeast), this protein is Meiosis-specific transcription factor NDT80 (NDT80).